We begin with the raw amino-acid sequence, 306 residues long: Ribonuclease Z (306 aa).

Zn(2+) is bound by residues His63, His65, Asp67, His68, His141, Asp211, and His269. The active-site Proton acceptor is the Asp67.

This sequence belongs to the RNase Z family. Homodimer. The cofactor is Zn(2+).

The enzyme catalyses Endonucleolytic cleavage of RNA, removing extra 3' nucleotides from tRNA precursor, generating 3' termini of tRNAs. A 3'-hydroxy group is left at the tRNA terminus and a 5'-phosphoryl group is left at the trailer molecule.. Its function is as follows. Zinc phosphodiesterase, which displays some tRNA 3'-processing endonuclease activity. Probably involved in tRNA maturation, by removing a 3'-trailer from precursor tRNA. This Staphylococcus carnosus (strain TM300) protein is Ribonuclease Z.